A 358-amino-acid polypeptide reads, in one-letter code: 3-dehydroquinate synthase (358 aa).

NAD(+)-binding positions include 72–77 (GGERVK), 106–110 (GALLD), 130–131 (ST), lysine 143, and lysine 151. 3 residues coordinate Zn(2+): glutamate 184, histidine 245, and histidine 261.

The protein belongs to the sugar phosphate cyclases superfamily. Dehydroquinate synthase family. NAD(+) is required as a cofactor. Co(2+) serves as cofactor. It depends on Zn(2+) as a cofactor.

Its subcellular location is the cytoplasm. It carries out the reaction 7-phospho-2-dehydro-3-deoxy-D-arabino-heptonate = 3-dehydroquinate + phosphate. Its pathway is metabolic intermediate biosynthesis; chorismate biosynthesis; chorismate from D-erythrose 4-phosphate and phosphoenolpyruvate: step 2/7. Its function is as follows. Catalyzes the conversion of 3-deoxy-D-arabino-heptulosonate 7-phosphate (DAHP) to dehydroquinate (DHQ). The protein is 3-dehydroquinate synthase (aroB) of Aeropyrum pernix (strain ATCC 700893 / DSM 11879 / JCM 9820 / NBRC 100138 / K1).